The primary structure comprises 204 residues: NAD(P)H dehydrogenase (quinone) (204 aa).

One can recognise a Flavodoxin-like domain in the interval 4 to 195 (IQIVFYSMYG…AIARFQGAHV (192 aa)). Residues 10–15 (SMYGHI) and 83–85 (TRF) contribute to the FMN site. Y12 is a binding site for NAD(+). W103 is a binding site for substrate. FMN-binding positions include 118-124 (STATQHG) and H139.

The protein belongs to the WrbA family. FMN serves as cofactor.

The enzyme catalyses a quinone + NADH + H(+) = a quinol + NAD(+). It carries out the reaction a quinone + NADPH + H(+) = a quinol + NADP(+). The sequence is that of NAD(P)H dehydrogenase (quinone) from Trichlorobacter lovleyi (strain ATCC BAA-1151 / DSM 17278 / SZ) (Geobacter lovleyi).